The primary structure comprises 205 residues: ATP-dependent Clp protease proteolytic subunit (205 aa).

The Nucleophile role is filled by Ser107. His132 is an active-site residue.

Belongs to the peptidase S14 family. As to quaternary structure, fourteen ClpP subunits assemble into 2 heptameric rings which stack back to back to give a disk-like structure with a central cavity, resembling the structure of eukaryotic proteasomes.

It is found in the cytoplasm. It catalyses the reaction Hydrolysis of proteins to small peptides in the presence of ATP and magnesium. alpha-casein is the usual test substrate. In the absence of ATP, only oligopeptides shorter than five residues are hydrolyzed (such as succinyl-Leu-Tyr-|-NHMec, and Leu-Tyr-Leu-|-Tyr-Trp, in which cleavage of the -Tyr-|-Leu- and -Tyr-|-Trp bonds also occurs).. Its function is as follows. Cleaves peptides in various proteins in a process that requires ATP hydrolysis. Has a chymotrypsin-like activity. Plays a major role in the degradation of misfolded proteins. The polypeptide is ATP-dependent Clp protease proteolytic subunit (Pseudoalteromonas translucida (strain TAC 125)).